We begin with the raw amino-acid sequence, 391 residues long: Ammonium transporter Amt1 (391 aa).

A run of 10 helical transmembrane segments spans residues 12 to 32 (VFFFMWAASLIFFMKAGFIAL), 51 to 71 (LDLAAVFIAYLFIGYGISYGF), 88 to 108 (AWWMKMVMFAAAAVTIITGGV), 112 to 132 (IKILPYFIGALIVGGILYPIV), 152 to 172 (AGSGAVHLFGGLVGLMAAYVL), 192 to 212 (IPIAVLGAFILAFGWYGFNIG), 223 to 243 (LASVAMATTMALAGGIIGGAL), 261 to 281 (VAVCSGVDLFTPIGAFIVGLL), 305 to 325 (IGPVHAMSGLIGVICAGIPFL), and 338 to 358 (GQIIGAIVIALIAIVGGLIIY).

The protein belongs to the ammonia transporter channel (TC 1.A.11.2) family. Homotrimer. Interacts and forms a complex with GlnK1.

It is found in the cell membrane. With respect to regulation, activity is regulated by the nitrogen regulatory protein GlnK1 via direct interaction. Formation of the GlnK1/Amt1 complex is decreased in the presence of Mg-ATP or 2-oxoglutarate. The presence of both effectors abolishes the formation of the complex. Functionally, involved in the uptake of ammonium/ammonia (NH(4)(+)/NH(3)). Transport is electrogenic. The protein is Ammonium transporter Amt1 of Methanocaldococcus jannaschii (strain ATCC 43067 / DSM 2661 / JAL-1 / JCM 10045 / NBRC 100440) (Methanococcus jannaschii).